The following is a 215-amino-acid chain: Lysozyme-like protein 5 (215 aa).

A signal peptide spans 1–17; it reads MKHFFITILLFCSVVSA. Positions 18–215 constitute a Ch-type lysozyme domain; sequence ARNGIDINSP…GVSVDMNYIP (198 aa). Active-site residues include aspartate 23, aspartate 113, and glutamate 115.

It belongs to the glycosyl hydrolase 25 family.

Functionally, plays a role in resistance to Gram-positive bacteria S.aureus or B.thuringiensis infection. The polypeptide is Lysozyme-like protein 5 (Caenorhabditis elegans).